The sequence spans 335 residues: Prepilin leader peptidase/N-methyltransferase (335 aa).

A helical membrane pass occupies residues 13-33 (LFAVFLFVLGLCVGSFLNVVI). Positions 49, 52, 74, and 77 each coordinate Zn(2+). 5 consecutive transmembrane segments (helical) span residues 105-125 (WTYE…LAFI), 131-151 (ILPL…AFPL), 206-226 (LLGV…LMLL), 258-278 (PGLP…VQPI), and 299-319 (IPFG…GPWL).

This sequence belongs to the peptidase A24 family. Zn(2+) is required as a cofactor.

It localises to the cell inner membrane. It catalyses the reaction Typically cleaves a -Gly-|-Phe- bond to release an N-terminal, basic peptide of 5-8 residues from type IV prepilin, and then N-methylates the new N-terminal amino group, the methyl donor being S-adenosyl-L-methionine.. Functionally, plays an essential role in type IV pili and type II pseudopili formation by proteolytically removing the leader sequence from substrate proteins and subsequently monomethylating the alpha-amino group of the newly exposed N-terminal phenylalanine. The polypeptide is Prepilin leader peptidase/N-methyltransferase (pilD) (Myxococcus xanthus (strain DK1622)).